Reading from the N-terminus, the 472-residue chain is Adenylyl cyclase-associated protein 1 (472 aa).

Ala-2 carries the N-acetylalanine modification. Position 31 is a phosphotyrosine (Tyr-31). At Ser-34 the chain carries Phosphoserine. An N6-acetyllysine modification is found at Lys-81. Residues 216 to 253 are disordered; the sequence is ELSGLPSGPSAGSGPPPPPPGPPPPPVPTSSGSDDSAS. The segment covering 218 to 228 has biased composition (low complexity); the sequence is SGLPSGPSAGS. A compositionally biased stretch (pro residues) spans 229-243; the sequence is GPPPPPPGPPPPPVP. Positions 244-253 are enriched in low complexity; it reads TSSGSDDSAS. N6-methyllysine is present on Lys-287. Residues Ser-290, Ser-295, and Ser-301 each carry the phosphoserine modification. The disordered stretch occupies residues 290–312; the sequence is SGLIRSGPKPFSASKPDPPKPVA. In terms of domain architecture, C-CAP/cofactor C-like spans 307 to 450; it reads PPKPVAKKEP…EGGDFNEFPV (144 aa). Residue Lys-345 forms a Glycyl lysine isopeptide (Lys-Gly) (interchain with G-Cter in SUMO1) linkage.

The protein belongs to the CAP family. Homodimer. Binds actin monomers.

The protein resides in the cell membrane. In terms of biological role, directly regulates filament dynamics and has been implicated in a number of complex developmental and morphological processes, including mRNA localization and the establishment of cell polarity. This is Adenylyl cyclase-associated protein 1 (CAP1) from Bos taurus (Bovine).